Consider the following 713-residue polypeptide: U3 small nucleolar RNA-associated protein 8 (713 aa).

Thr95 is subject to Phosphothreonine. 2 positions are modified to phosphoserine: Ser148 and Ser150.

As to quaternary structure, interacts with snoRNA U3. Interacts with MPP10 and UTP25. Component of the ribosomal small subunit (SSU) processome composed of at least 40 protein subunits and snoRNA U3. In the absence of snoRNA3, forms a complex with other t-UTPs. This complex can associate with pre-18S ribosomal RNAs.

Its subcellular location is the nucleus. It is found in the nucleolus. Functionally, involved in nucleolar processing of pre-18S ribosomal RNA. Also has a role in nuclear tRNA export. It acts between the steps of tRNA maturation/aminoacylation and its subsequent translocation out of the nucleus. Required for optimal pre-ribosomal RNA transcription by RNA polymerase I together with a subset of U3 proteins required for transcription (t-UTPs). The polypeptide is U3 small nucleolar RNA-associated protein 8 (UTP8) (Saccharomyces cerevisiae (strain ATCC 204508 / S288c) (Baker's yeast)).